The following is a 537-amino-acid chain: Ataxin-10 homolog (537 aa).

It belongs to the ataxin-10 family.

It is found in the cytoplasm. Its function is as follows. May play a role in the regulation of cytokinesis. This is Ataxin-10 homolog (CTR86) from Kluyveromyces lactis (strain ATCC 8585 / CBS 2359 / DSM 70799 / NBRC 1267 / NRRL Y-1140 / WM37) (Yeast).